Here is a 449-residue protein sequence, read N- to C-terminus: uncharacterized protein (449 aa).

Transmembrane regions (helical) follow at residues 1-21, 26-46, 51-71, 97-117, 137-157, 178-198, 223-243, 244-264, 285-305, 310-330, 340-360, 377-397, and 425-445; these read MVAN…ILLI, IHLT…HVIT, IDYI…MVLV, LLML…PNAT, FVPI…LTLV, FKLS…TPFL, VLMA…IGES, LPVP…ALLL, LIFF…GVTA, LLAV…VFTV, IPLV…IGFA, VLPL…GTLV, and GLPV…WLMF.

The protein belongs to the CitM (TC 2.A.11) transporter family.

The protein localises to the cell membrane. This is an uncharacterized protein from Synechocystis sp. (strain ATCC 27184 / PCC 6803 / Kazusa).